Reading from the N-terminus, the 387-residue chain is Galactokinase (387 aa).

A substrate-binding site is contributed by Glu33–Asp36. ATP is bound by residues Ser67 and Gly124 to Ser130. Mg(2+) contacts are provided by Ser130 and Glu162. The active-site Proton acceptor is Asp174. Residue Tyr224 participates in substrate binding.

The protein belongs to the GHMP kinase family. GalK subfamily.

The protein localises to the cytoplasm. It catalyses the reaction alpha-D-galactose + ATP = alpha-D-galactose 1-phosphate + ADP + H(+). It participates in carbohydrate metabolism; galactose metabolism. Functionally, catalyzes the transfer of the gamma-phosphate of ATP to D-galactose to form alpha-D-galactose-1-phosphate (Gal-1-P). In Clostridium perfringens (strain SM101 / Type A), this protein is Galactokinase.